The primary structure comprises 49 residues: Large ribosomal subunit protein bL33 (49 aa).

Belongs to the bacterial ribosomal protein bL33 family.

This is Large ribosomal subunit protein bL33 from Finegoldia magna (strain ATCC 29328 / DSM 20472 / WAL 2508) (Peptostreptococcus magnus).